Here is a 242-residue protein sequence, read N- to C-terminus: Small ribosomal subunit protein uS2 (242 aa).

The protein belongs to the universal ribosomal protein uS2 family.

This chain is Small ribosomal subunit protein uS2, found in Shewanella piezotolerans (strain WP3 / JCM 13877).